The following is a 185-amino-acid chain: Ribosome-recycling factor (185 aa).

This sequence belongs to the RRF family.

The protein localises to the cytoplasm. In terms of biological role, responsible for the release of ribosomes from messenger RNA at the termination of protein biosynthesis. May increase the efficiency of translation by recycling ribosomes from one round of translation to another. The protein is Ribosome-recycling factor of Exiguobacterium sibiricum (strain DSM 17290 / CCUG 55495 / CIP 109462 / JCM 13490 / 255-15).